The following is a 153-amino-acid chain: Pheromone-binding protein Gp-9 (153 aa).

An N-terminal signal peptide occupies residues 1–19; that stretch reads MKTFVLHIFIFALVAFASA. 3 cysteine pairs are disulfide-bonded: C37–C77, C73–C129, and C118–C138.

This sequence belongs to the PBP/GOBP family. In terms of assembly, homodimer.

It is found in the secreted. Functionally, colony queen number, a major feature of social organization, is associated with worker genotype for Gp-9. Colonies are headed by either a single reproductive queen (monogyne form) or multiple queens (polygyne form). Differences in worker Gp-9 genotypes between social forms may cause differences in workers' abilities to recognize queens and regulate their numbers. The sequence is that of Pheromone-binding protein Gp-9 from Solenopsis n. sp. (strain JP-2002) (Fire ant).